The following is a 243-amino-acid chain: Small ribosomal subunit protein uS3 (243 aa).

A KH type-2 domain is found at 38 to 106; it reads IRKYLNARLA…DIQINIFEVK (69 aa). A disordered region spans residues 217–243; the sequence is TQTKESGRGGNGNNNGGKNFKRKKNNR.

It belongs to the universal ribosomal protein uS3 family. In terms of assembly, part of the 30S ribosomal subunit. Forms a tight complex with proteins S10 and S14.

In terms of biological role, binds the lower part of the 30S subunit head. Binds mRNA in the 70S ribosome, positioning it for translation. The polypeptide is Small ribosomal subunit protein uS3 (Phocaeicola vulgatus (strain ATCC 8482 / DSM 1447 / JCM 5826 / CCUG 4940 / NBRC 14291 / NCTC 11154) (Bacteroides vulgatus)).